A 269-amino-acid polypeptide reads, in one-letter code: Formamidopyrimidine-DNA glycosylase (269 aa).

The Schiff-base intermediate with DNA role is filled by proline 2. Glutamate 3 serves as the catalytic Proton donor. The Proton donor; for beta-elimination activity role is filled by lysine 57. The DNA site is built by histidine 90, arginine 109, and lysine 150. The FPG-type zinc-finger motif lies at 235 to 269; sequence QVYGRKGEPCRVCGTPIVATKHAQRATFYCRQCQK. The active-site Proton donor; for delta-elimination activity is arginine 259.

This sequence belongs to the FPG family. Monomer. The cofactor is Zn(2+).

The enzyme catalyses Hydrolysis of DNA containing ring-opened 7-methylguanine residues, releasing 2,6-diamino-4-hydroxy-5-(N-methyl)formamidopyrimidine.. The catalysed reaction is 2'-deoxyribonucleotide-(2'-deoxyribose 5'-phosphate)-2'-deoxyribonucleotide-DNA = a 3'-end 2'-deoxyribonucleotide-(2,3-dehydro-2,3-deoxyribose 5'-phosphate)-DNA + a 5'-end 5'-phospho-2'-deoxyribonucleoside-DNA + H(+). In terms of biological role, involved in base excision repair of DNA damaged by oxidation or by mutagenic agents. Acts as a DNA glycosylase that recognizes and removes damaged bases. Has a preference for oxidized purines, such as 7,8-dihydro-8-oxoguanine (8-oxoG). Has AP (apurinic/apyrimidinic) lyase activity and introduces nicks in the DNA strand. Cleaves the DNA backbone by beta-delta elimination to generate a single-strand break at the site of the removed base with both 3'- and 5'-phosphates. This chain is Formamidopyrimidine-DNA glycosylase, found in Escherichia coli (strain K12 / MC4100 / BW2952).